The primary structure comprises 562 residues: Arginine--tRNA ligase (562 aa).

The 'HIGH' region signature appears at 129 to 139 (ANPTGPLHVGH).

It belongs to the class-I aminoacyl-tRNA synthetase family. In terms of assembly, monomer.

The protein localises to the cytoplasm. It catalyses the reaction tRNA(Arg) + L-arginine + ATP = L-arginyl-tRNA(Arg) + AMP + diphosphate. The chain is Arginine--tRNA ligase from Xanthomonas oryzae pv. oryzae (strain MAFF 311018).